The primary structure comprises 595 residues: Threonine dehydratase 2 biosynthetic, chloroplastic (595 aa).

A chloroplast-targeting transit peptide spans 1 to 51 (MEFLCLAPTRSFSTNPKLTKSIPSDHTSTTSRIFTYQNMRGSTMRPLALPL). N6-(pyridoxal phosphate)lysine is present on K143. ACT-like domains follow at residues 420–492 (ALLA…NLSH) and 514–585 (IFGE…LDNY).

It belongs to the serine/threonine dehydratase family. Homotetramer. Pyridoxal 5'-phosphate serves as cofactor. In terms of processing, proteolytically cleaved by a chymotrypsin-like digestive protease in the midgut of the lepidopteran insects to remove the C-terminal regulatory domain, which allows efficient metabolizing of threonine in the presence of high isoleucine levels in the gut. As to expression, expressed in floral buds, 8-9 mm long flowers 1 to 2 days before anthesis, open flowers and floral organs including sepals, petals, stamens and carpels of 8-9 mm flowers (at protein level). Expressed in very early floral meristems of the anantha. Over 500-fold expression in mature flowers compared to leaves. Expressed in sepals, petals, stamens and carpels of the mature flower. In sepals, mostly expressed in the abaxial mesophyll cells and in petals in parenchymal cells. Not expressed in epidermal or vascular tissues of sepals and petals. In stamens, expressed in parenchymal cells of the connective and lobes, but not expressed in differentiated tissues such as tapetum (TP), stomium (SM), or pollen grains (PG). Not expressed in roots or seeds. High level of expression in immature flower buds, unopened flowers and opened flowers. Not expressed in unstressed leaves, root, stem or petiole.

The protein localises to the plastid. It localises to the chloroplast. The enzyme catalyses L-threonine = 2-oxobutanoate + NH4(+). It catalyses the reaction L-serine = pyruvate + NH4(+). The protein operates within amino-acid biosynthesis; L-isoleucine biosynthesis; 2-oxobutanoate from L-threonine: step 1/1. Threonine dehydratase 2 biosynthetic, chloroplastic: Strongly inhibited by 1 mM isoleucine. Processed threonine dehydratase 2: Not inhibited by isoleucine. In terms of biological role, not required for normal growth and development of the plant. Functionally, involved in defense against lepidopteran, but not coleopteran herbivore insects. Acts in the insect gut to degrade threonine, which is an essential and limiting nutrient for the growth of lepidopteran larvae. Active against both L-threonine and L-serine. In Solanum lycopersicum (Tomato), this protein is Threonine dehydratase 2 biosynthetic, chloroplastic.